We begin with the raw amino-acid sequence, 400 residues long: Acetate kinase (400 aa).

Position 9 (Asn9) interacts with Mg(2+). Lys16 provides a ligand contact to ATP. Residue Arg90 coordinates substrate. Residue Asp147 is the Proton donor/acceptor of the active site. Residues 207 to 211 (HIGNG), 282 to 284 (DLR), and 330 to 334 (GIGEN) each bind ATP. Glu385 is a Mg(2+) binding site.

It belongs to the acetokinase family. As to quaternary structure, homodimer. Requires Mg(2+) as cofactor. The cofactor is Mn(2+).

The protein resides in the cytoplasm. It carries out the reaction acetate + ATP = acetyl phosphate + ADP. It participates in metabolic intermediate biosynthesis; acetyl-CoA biosynthesis; acetyl-CoA from acetate: step 1/2. Functionally, catalyzes the formation of acetyl phosphate from acetate and ATP. Can also catalyze the reverse reaction. This Staphylococcus aureus (strain USA300) protein is Acetate kinase.